Reading from the N-terminus, the 311-residue chain is Ribosomal protein L11 methyltransferase (311 aa).

Positions 162, 183, 205, and 248 each coordinate S-adenosyl-L-methionine.

Belongs to the methyltransferase superfamily. PrmA family.

It is found in the cytoplasm. It catalyses the reaction L-lysyl-[protein] + 3 S-adenosyl-L-methionine = N(6),N(6),N(6)-trimethyl-L-lysyl-[protein] + 3 S-adenosyl-L-homocysteine + 3 H(+). Methylates ribosomal protein L11. This chain is Ribosomal protein L11 methyltransferase, found in Bacillus pumilus (strain SAFR-032).